Here is a 118-residue protein sequence, read N- to C-terminus: MQFKTIFATLAAFAAVASALPTSSSEQNGNGQCAVGQAQCCSQVQKQGKDASDALAGLGLAFNQILDGAIGLDCQQIPVGVLGGAIAIQNTCKNTAVCCQGSANNGLIQTSCTPLSIN.

Positions 1-19 are cleaved as a signal peptide; that stretch reads MQFKTIFATLAAFAAVASA. Intrachain disulfides connect Cys-33/Cys-98, Cys-40/Cys-92, Cys-41/Cys-74, and Cys-99/Cys-112.

The protein belongs to the fungal hydrophobin family. As to quaternary structure, self-assembles to form functional amyloid fibrils called rodlets. Self-assembly into fibrillar rodlets occurs spontaneously at hydrophobic:hydrophilic interfaces and the rodlets further associate laterally to form amphipathic monolayers.

It localises to the secreted. The protein localises to the cell wall. Aerial growth, conidiation, and dispersal of filamentous fungi in the environment rely upon a capability of their secreting small amphipathic proteins called hydrophobins (HPBs) with low sequence identity. Class I can self-assemble into an outermost layer of rodlet bundles on aerial cell surfaces, conferring cellular hydrophobicity that supports fungal growth, development and dispersal; whereas Class II form highly ordered films at water-air interfaces through intermolecular interactions but contribute nothing to the rodlet structure. Hum2 is a class I hydrophobin which that plays a role in, but seems not to be crucial for the formation of aerial hyphae. Hydrophobins of Mycosarcoma maydis have been functionally replaced, at least partially, by repellents. This Mycosarcoma maydis (Corn smut fungus) protein is Class I hydrophobin hum2.